The chain runs to 502 residues: Maturase K (502 aa).

The protein belongs to the intron maturase 2 family. MatK subfamily.

Its subcellular location is the plastid. The protein localises to the chloroplast. In terms of biological role, usually encoded in the trnK tRNA gene intron. Probably assists in splicing its own and other chloroplast group II introns. The sequence is that of Maturase K from Brassica oleracea (Wild cabbage).